The chain runs to 443 residues: Probable ribonuclease FAU-1 (443 aa).

This sequence belongs to the FAU-1 family.

Probable RNase involved in rRNA stability through maturation and/or degradation of precursor rRNAs. Binds to RNA in loop regions with AU-rich sequences. The polypeptide is Probable ribonuclease FAU-1 (Pyrobaculum aerophilum (strain ATCC 51768 / DSM 7523 / JCM 9630 / CIP 104966 / NBRC 100827 / IM2)).